Consider the following 63-residue polypeptide: Large ribosomal subunit protein bL28 (63 aa).

The protein belongs to the bacterial ribosomal protein bL28 family.

The protein is Large ribosomal subunit protein bL28 of Clostridium botulinum (strain Alaska E43 / Type E3).